We begin with the raw amino-acid sequence, 508 residues long: Maturase K (508 aa).

Belongs to the intron maturase 2 family. MatK subfamily.

It is found in the plastid. The protein localises to the chloroplast. In terms of biological role, usually encoded in the trnK tRNA gene intron. Probably assists in splicing its own and other chloroplast group II introns. The polypeptide is Maturase K (Stewartia pseudocamellia (Japanese stewartia)).